The sequence spans 444 residues: Methylenetetrahydrofolate--tRNA-(uracil-5-)-methyltransferase TrmFO (444 aa).

9–14 (GAGMAG) is a binding site for FAD.

Belongs to the MnmG family. TrmFO subfamily. FAD serves as cofactor.

The protein resides in the cytoplasm. It carries out the reaction uridine(54) in tRNA + (6R)-5,10-methylene-5,6,7,8-tetrahydrofolate + NADH + H(+) = 5-methyluridine(54) in tRNA + (6S)-5,6,7,8-tetrahydrofolate + NAD(+). The enzyme catalyses uridine(54) in tRNA + (6R)-5,10-methylene-5,6,7,8-tetrahydrofolate + NADPH + H(+) = 5-methyluridine(54) in tRNA + (6S)-5,6,7,8-tetrahydrofolate + NADP(+). Its function is as follows. Catalyzes the folate-dependent formation of 5-methyl-uridine at position 54 (M-5-U54) in all tRNAs. The sequence is that of Methylenetetrahydrofolate--tRNA-(uracil-5-)-methyltransferase TrmFO from Cereibacter sphaeroides (strain ATCC 17025 / ATH 2.4.3) (Rhodobacter sphaeroides).